A 347-amino-acid chain; its full sequence is Quinolinate synthase (347 aa).

Residues His-47 and Ser-68 each contribute to the iminosuccinate site. Cys-113 is a [4Fe-4S] cluster binding site. Residues 139–141 and Ser-156 contribute to the iminosuccinate site; that span reads YAN. Cys-200 lines the [4Fe-4S] cluster pocket. Residues 226–228 and Thr-243 each bind iminosuccinate; that span reads HPE. A [4Fe-4S] cluster-binding site is contributed by Cys-297.

Belongs to the quinolinate synthase family. Type 1 subfamily. Requires [4Fe-4S] cluster as cofactor.

The protein localises to the cytoplasm. The catalysed reaction is iminosuccinate + dihydroxyacetone phosphate = quinolinate + phosphate + 2 H2O + H(+). It functions in the pathway cofactor biosynthesis; NAD(+) biosynthesis; quinolinate from iminoaspartate: step 1/1. In terms of biological role, catalyzes the condensation of iminoaspartate with dihydroxyacetone phosphate to form quinolinate. The sequence is that of Quinolinate synthase from Salmonella gallinarum (strain 287/91 / NCTC 13346).